Here is a 432-residue protein sequence, read N- to C-terminus: Vacuolar protein sorting-associated protein 38 (432 aa).

N-linked (GlcNAc...) asparagine glycosylation is present at asparagine 20. A coiled-coil region spans residues 216–287 (LDTYQENIKM…KEAIEKLQKK (72 aa)). A helical membrane pass occupies residues 348–365 (IINAMLGFYSLFIVIYSY).

The protein belongs to the VPS38 family. As to quaternary structure, component of the VPS34 PI3-kinase complex II composed of VPS15, VPS30, VPS34 and VPS38.

It localises to the golgi apparatus. Its subcellular location is the trans-Golgi network membrane. The protein localises to the endosome membrane. Involved in endosome-to-Golgi retrograde transport as part of the VPS34 PI3-kinase complex II. This complex is required for the endosome-to-Golgi retrieval of PEP1 and KEX2, and the recruitment of VPS5 and VPS7, two components of the retromer complex, to endosomal membranes (probably through generating a specific pool of phosphatidylinositol 3-phosphate allowing the recruitment of the retromer complex proteins to the endosome). Mediates the interaction between VPS30 and the VPS34-VPS15 core complex, leading to the recruitment of VPS30 to the membrane. This is Vacuolar protein sorting-associated protein 38 from Candida glabrata (strain ATCC 2001 / BCRC 20586 / JCM 3761 / NBRC 0622 / NRRL Y-65 / CBS 138) (Yeast).